The following is a 622-amino-acid chain: Membrane protein insertase YidC (622 aa).

A helical transmembrane segment spans residues 8–28; it reads LFLALILSMGIWMGVNYFFFP. The segment covering 33–61 has biased composition (basic and acidic residues); sequence KTSETKEVKVDKPSDDKQDQIQKEKKESR. Residues 33–70 form a disordered region; sequence KTSETKEVKVDKPSDDKQDQIQKEKKESRTTIPSKGTK. Helical transmembrane passes span 413–433, 484–504, 532–552, and 571–591; these read FTIP…KLVF, VGGC…YTAF, AIPY…LMVG, and MLMY…PSGV.

This sequence belongs to the OXA1/ALB3/YidC family. Type 1 subfamily. Interacts with the Sec translocase complex via SecD. Specifically interacts with transmembrane segments of nascent integral membrane proteins during membrane integration.

The protein localises to the cell inner membrane. Functionally, required for the insertion and/or proper folding and/or complex formation of integral membrane proteins into the membrane. Involved in integration of membrane proteins that insert both dependently and independently of the Sec translocase complex, as well as at least some lipoproteins. Aids folding of multispanning membrane proteins. The protein is Membrane protein insertase YidC of Leptospira borgpetersenii serovar Hardjo-bovis (strain JB197).